Consider the following 132-residue polypeptide: Aspartate 1-decarboxylase (132 aa).

Serine 25 serves as the catalytic Schiff-base intermediate with substrate; via pyruvic acid. The residue at position 25 (serine 25) is a Pyruvic acid (Ser). Threonine 57 provides a ligand contact to substrate. Tyrosine 58 functions as the Proton donor in the catalytic mechanism. Position 73–75 (73–75) interacts with substrate; that stretch reads GAA.

The protein belongs to the PanD family. Heterooctamer of four alpha and four beta subunits. It depends on pyruvate as a cofactor. In terms of processing, is synthesized initially as an inactive proenzyme, which is activated by self-cleavage at a specific serine bond to produce a beta-subunit with a hydroxyl group at its C-terminus and an alpha-subunit with a pyruvoyl group at its N-terminus.

It is found in the cytoplasm. It catalyses the reaction L-aspartate + H(+) = beta-alanine + CO2. Its pathway is cofactor biosynthesis; (R)-pantothenate biosynthesis; beta-alanine from L-aspartate: step 1/1. In terms of biological role, catalyzes the pyruvoyl-dependent decarboxylation of aspartate to produce beta-alanine. The chain is Aspartate 1-decarboxylase from Pelotomaculum thermopropionicum (strain DSM 13744 / JCM 10971 / SI).